We begin with the raw amino-acid sequence, 263 residues long: Triosephosphate isomerase (263 aa).

10 to 12 (NWK) lines the substrate pocket. His-104 (electrophile) is an active-site residue. The active-site Proton acceptor is Glu-176. Residues Gly-182, Ser-221, and 242–243 (GG) each bind substrate.

The protein belongs to the triosephosphate isomerase family. In terms of assembly, homodimer.

The protein localises to the cytoplasm. It catalyses the reaction D-glyceraldehyde 3-phosphate = dihydroxyacetone phosphate. Its pathway is carbohydrate biosynthesis; gluconeogenesis. It participates in carbohydrate degradation; glycolysis; D-glyceraldehyde 3-phosphate from glycerone phosphate: step 1/1. In terms of biological role, involved in the gluconeogenesis. Catalyzes stereospecifically the conversion of dihydroxyacetone phosphate (DHAP) to D-glyceraldehyde-3-phosphate (G3P). The sequence is that of Triosephosphate isomerase from Haemophilus influenzae (strain PittEE).